The chain runs to 70 residues: Large ribosomal subunit protein bL31 (70 aa).

An N6-acetyllysine modification is found at Lys-8. Positions 16, 18, 37, and 40 each coordinate Zn(2+).

It belongs to the bacterial ribosomal protein bL31 family. Type A subfamily. In terms of assembly, part of the 50S ribosomal subunit. Zn(2+) is required as a cofactor.

Functionally, binds the 23S rRNA. The sequence is that of Large ribosomal subunit protein bL31 from Shigella flexneri.